We begin with the raw amino-acid sequence, 273 residues long: Cytoplasmic phosphatidylinositol transfer protein 1 (273 aa).

A disordered region spans residues 244 to 273; it reads QAETNEKIHNTSGGANAAANAKEANDGDID.

Belongs to the PtdIns transfer protein family. PI transfer class IIB subfamily.

In terms of biological role, phosphatidylinositol transfer proteins mediate the monomeric transport of lipids by shielding a lipid from the aqueous environment and binding the lipid in a hydrophobic cavity. The protein is Cytoplasmic phosphatidylinositol transfer protein 1 (rdgBbeta) of Drosophila melanogaster (Fruit fly).